Here is a 1598-residue protein sequence, read N- to C-terminus: Structural maintenance of chromosomes flexible hinge domain-containing protein GMI1 (1598 aa).

Positions 1191-1218 are disordered; that stretch reads VTSAPTSEREESGYSTPHSKTTPPPESG. 2 coiled-coil regions span residues 1258 to 1301 and 1565 to 1595; these read TEDL…ASLE and EEMM…FTAM.

In terms of tissue distribution, highly expressed in closed buds and open flowers. Expressed at low levels in roots, stems, cauline leaves and siliques. Expressed in the region of the shoot and floral meristems.

It is found in the nucleus. In terms of biological role, contributes to DNA double-strand break (DSB) repair via somatic homologous recombination. Functions downstream of ATM. The polypeptide is Structural maintenance of chromosomes flexible hinge domain-containing protein GMI1 (Arabidopsis thaliana (Mouse-ear cress)).